Consider the following 430-residue polypeptide: Glutamate-1-semialdehyde 2,1-aminomutase (430 aa).

An N6-(pyridoxal phosphate)lysine modification is found at Lys-267.

This sequence belongs to the class-III pyridoxal-phosphate-dependent aminotransferase family. HemL subfamily. In terms of assembly, homodimer. The cofactor is pyridoxal 5'-phosphate.

It localises to the cytoplasm. It catalyses the reaction (S)-4-amino-5-oxopentanoate = 5-aminolevulinate. It participates in porphyrin-containing compound metabolism; protoporphyrin-IX biosynthesis; 5-aminolevulinate from L-glutamyl-tRNA(Glu): step 2/2. This chain is Glutamate-1-semialdehyde 2,1-aminomutase, found in Anaeromyxobacter dehalogenans (strain 2CP-1 / ATCC BAA-258).